The following is a 1105-amino-acid chain: Mediator of RNA polymerase II transcription subunit 14 (1105 aa).

The disordered stretch occupies residues 28–48; it reads ASQQANGGIYRNGIGKKSHSP.

Belongs to the Mediator complex subunit 14 family. Component of the Mediator complex.

It is found in the nucleus. Its function is as follows. Component of the Mediator complex, a coactivator involved in the regulated transcription of nearly all RNA polymerase II-dependent genes. Mediator functions as a bridge to convey information from gene-specific regulatory proteins to the basal RNA polymerase II transcription machinery. Mediator is recruited to promoters by direct interactions with regulatory proteins and serves as a scaffold for the assembly of a functional preinitiation complex with RNA polymerase II and the general transcription factors. This is Mediator of RNA polymerase II transcription subunit 14 (RGR1) from Coccidioides immitis (strain RS) (Valley fever fungus).